We begin with the raw amino-acid sequence, 908 residues long: Translation initiation factor IF-2 (908 aa).

Disordered stretches follow at residues 122–180 (PVVE…VDDA) and 203–267 (EKAR…AVKK). Residues 132 to 143 (VAAEPEVVEAPE) show a composition bias toward acidic residues. Residues 157-166 (EEPAAPAAPV) are compositionally biased toward low complexity. Positions 223–248 (AKEDARPTKHVEDLAKLKKPHDKKDE) are enriched in basic and acidic residues. Residues 256-267 (KHNKKAGKAVKK) are compositionally biased toward basic residues. Residues 409–578 (PRAPIVTVMG…ALQAELLELS (170 aa)) enclose the tr-type G domain. A G1 region spans residues 418-425 (GHVDHGKT). Position 418 to 425 (418 to 425 (GHVDHGKT)) interacts with GTP. The segment at 443-447 (GITQH) is G2. The tract at residues 464–467 (DTPG) is G3. GTP-binding positions include 464-468 (DTPGH) and 518-521 (NKMD). The tract at residues 518–521 (NKMD) is G4. A G5 region spans residues 554–556 (SAH).

Belongs to the TRAFAC class translation factor GTPase superfamily. Classic translation factor GTPase family. IF-2 subfamily.

Its subcellular location is the cytoplasm. Its function is as follows. One of the essential components for the initiation of protein synthesis. Protects formylmethionyl-tRNA from spontaneous hydrolysis and promotes its binding to the 30S ribosomal subunits. Also involved in the hydrolysis of GTP during the formation of the 70S ribosomal complex. The protein is Translation initiation factor IF-2 of Saccharophagus degradans (strain 2-40 / ATCC 43961 / DSM 17024).